Here is a 61-residue protein sequence, read N- to C-terminus: Small ribosomal subunit protein uS14 (61 aa).

Residues cysteine 24, cysteine 27, cysteine 40, and cysteine 43 each contribute to the Zn(2+) site.

The protein belongs to the universal ribosomal protein uS14 family. Zinc-binding uS14 subfamily. As to quaternary structure, part of the 30S ribosomal subunit. Contacts proteins S3 and S10. It depends on Zn(2+) as a cofactor.

Its function is as follows. Binds 16S rRNA, required for the assembly of 30S particles and may also be responsible for determining the conformation of the 16S rRNA at the A site. This Brevibacillus brevis (strain 47 / JCM 6285 / NBRC 100599) protein is Small ribosomal subunit protein uS14.